Consider the following 434-residue polypeptide: Protein maelstrom homolog (434 aa).

The segment at residues 4-73 (RKASRNAYYF…AQGKDSGPSE (70 aa)) is a DNA-binding region (HMG box). Disordered stretches follow at residues 62–94 (RAAQ…KQNV) and 357–385 (SHFN…SGQN). Residues 357–371 (SHFNSANQEQRSNTP) are compositionally biased toward polar residues.

Belongs to the maelstrom family. Interacts with SMARCB1, SIN3B and DDX4. Interacts with piRNA-associated proteins TDRD1, PIWIL1 and PIWIL2. Interacts with TEX19.

It localises to the cytoplasm. Its subcellular location is the nucleus. Plays a central role during spermatogenesis by repressing transposable elements and preventing their mobilization, which is essential for the germline integrity. Acts via the piRNA metabolic process, which mediates the repression of transposable elements during meiosis by forming complexes composed of piRNAs and Piwi proteins and governs the methylation and subsequent repression of transposons. Its association with piP-bodies suggests a participation in the secondary piRNAs metabolic process. Required for the localization of germ-cell factors to the meiotic nuage. In Macaca fascicularis (Crab-eating macaque), this protein is Protein maelstrom homolog (MAEL).